Consider the following 451-residue polypeptide: UPF0210 protein LMHCC_2097 (451 aa).

The protein belongs to the UPF0210 family. As to quaternary structure, homodimer.

This chain is UPF0210 protein LMHCC_2097, found in Listeria monocytogenes serotype 4a (strain HCC23).